The following is a 172-amino-acid chain: MGSDADADLGERRPFPVSWDQFHRDCRALTWRLNEVGPFAAVIAITRGGLVPAAIVARELGLRVIDTICVASYAHDKQGDLQVLKGVSEQTAALGHGTGKGLLIVDDLVDTGKTGRMVRDLLPDAHFATVYAKPMGKPLVDTFITEVSQDTWIFFPWDTGLSFQPPLKDGAA.

5-phospho-alpha-D-ribose 1-diphosphate is bound by residues 47 to 48 (RG) and 106 to 114 (DDLVDTGKT). Aspartate 107 is a binding site for Mg(2+). Positions 110 and 153 each coordinate guanine. Residues aspartate 110 and isoleucine 153 each contribute to the xanthine site. GMP is bound by residues 110-114 (DTGKT) and 152-153 (WI).

The protein belongs to the purine/pyrimidine phosphoribosyltransferase family. XGPT subfamily. Homotetramer. The cofactor is Mg(2+).

It is found in the cell inner membrane. The enzyme catalyses GMP + diphosphate = guanine + 5-phospho-alpha-D-ribose 1-diphosphate. It carries out the reaction XMP + diphosphate = xanthine + 5-phospho-alpha-D-ribose 1-diphosphate. The catalysed reaction is IMP + diphosphate = hypoxanthine + 5-phospho-alpha-D-ribose 1-diphosphate. It participates in purine metabolism; GMP biosynthesis via salvage pathway; GMP from guanine: step 1/1. Its pathway is purine metabolism; XMP biosynthesis via salvage pathway; XMP from xanthine: step 1/1. Its function is as follows. Purine salvage pathway enzyme that catalyzes the transfer of the ribosyl-5-phosphate group from 5-phospho-alpha-D-ribose 1-diphosphate (PRPP) to the N9 position of the 6-oxopurines guanine and xanthine to form the corresponding ribonucleotides GMP (guanosine 5'-monophosphate) and XMP (xanthosine 5'-monophosphate), with the release of PPi. To a lesser extent, also acts on hypoxanthine. In Rhodopseudomonas palustris (strain HaA2), this protein is Xanthine-guanine phosphoribosyltransferase.